Consider the following 175-residue polypeptide: ATP synthase subunit b, chloroplastic (175 aa).

The chain crosses the membrane as a helical span at residues 26-44 (VINLAVVIGVVVSFVGDAV).

The protein belongs to the ATPase B chain family. In terms of assembly, F-type ATPases have 2 components, F(1) - the catalytic core - and F(0) - the membrane proton channel. F(1) has five subunits: alpha(3), beta(3), gamma(1), delta(1), epsilon(1). F(0) has four main subunits: a(1), b(1), b'(1) and c(10-14). The alpha and beta chains form an alternating ring which encloses part of the gamma chain. F(1) is attached to F(0) by a central stalk formed by the gamma and epsilon chains, while a peripheral stalk is formed by the delta, b and b' chains.

The protein resides in the plastid. The protein localises to the chloroplast thylakoid membrane. In terms of biological role, f(1)F(0) ATP synthase produces ATP from ADP in the presence of a proton or sodium gradient. F-type ATPases consist of two structural domains, F(1) containing the extramembraneous catalytic core and F(0) containing the membrane proton channel, linked together by a central stalk and a peripheral stalk. During catalysis, ATP synthesis in the catalytic domain of F(1) is coupled via a rotary mechanism of the central stalk subunits to proton translocation. Component of the F(0) channel, it forms part of the peripheral stalk, linking F(1) to F(0). This chain is ATP synthase subunit b, chloroplastic, found in Tupiella akineta (Green alga).